We begin with the raw amino-acid sequence, 166 residues long: Endoribonuclease YbeY (166 aa).

The Zn(2+) site is built by H132, H136, and H142.

This sequence belongs to the endoribonuclease YbeY family. It depends on Zn(2+) as a cofactor.

Its subcellular location is the cytoplasm. Functionally, single strand-specific metallo-endoribonuclease involved in late-stage 70S ribosome quality control and in maturation of the 3' terminus of the 16S rRNA. This is Endoribonuclease YbeY from Clostridium botulinum (strain Eklund 17B / Type B).